The chain runs to 300 residues: MTSRPRSRRAVNLQILPSSMTVLSICAGLTSIRFALEHQPKAAIALIAAAAILDGLDGRVARILGAESRMGEEIDSLADAVNFGVAPAVVLYATMLSTTPVGWVAVLLYPVCVVLRLARFNALLDDGTQPAYTREFFVGMPAPAGAVSVIGLLALKLQFGAGWWTSTWFLCIWVTGTSMLLISRIPMKKMHTVSVPPHYAAVFVAMLAIFAAAVVLAPYLLIWVIILTYLCHIPFAIHNQRWLAAHPEAWDDKFKQQHDARRAARRACPNRHAVPRLGLLKPGSRSMVRSGLRKPGRRFI.

6 helical membrane passes run 10–30 (AVNL…AGLT), 74–94 (IDSL…LYAT), 95–115 (MLST…CVVL), 135–155 (EFFV…LLAL), 162–182 (GWWT…MLLI), and 207–227 (LAIF…VIIL).

The protein belongs to the CDP-alcohol phosphatidyltransferase class-I family.

Its subcellular location is the cell membrane. The catalysed reaction is a CDP-1,2-diacyl-sn-glycerol + L-serine = a 1,2-diacyl-sn-glycero-3-phospho-L-serine + CMP + H(+). The polypeptide is CDP-diacylglycerol--serine O-phosphatidyltransferase (pssA) (Mycobacterium leprae (strain TN)).